Here is a 312-residue protein sequence, read N- to C-terminus: Acetyl-coenzyme A carboxylase carboxyl transferase subunit alpha (312 aa).

The CoA carboxyltransferase C-terminal domain maps to leucine 32 to glutamate 286.

The protein belongs to the AccA family. In terms of assembly, acetyl-CoA carboxylase is a heterohexamer composed of biotin carboxyl carrier protein (AccB), biotin carboxylase (AccC) and two subunits each of ACCase subunit alpha (AccA) and ACCase subunit beta (AccD).

Its subcellular location is the cytoplasm. It carries out the reaction N(6)-carboxybiotinyl-L-lysyl-[protein] + acetyl-CoA = N(6)-biotinyl-L-lysyl-[protein] + malonyl-CoA. The protein operates within lipid metabolism; malonyl-CoA biosynthesis; malonyl-CoA from acetyl-CoA: step 1/1. Its function is as follows. Component of the acetyl coenzyme A carboxylase (ACC) complex. First, biotin carboxylase catalyzes the carboxylation of biotin on its carrier protein (BCCP) and then the CO(2) group is transferred by the carboxyltransferase to acetyl-CoA to form malonyl-CoA. The protein is Acetyl-coenzyme A carboxylase carboxyl transferase subunit alpha of Thermus thermophilus (strain ATCC BAA-163 / DSM 7039 / HB27).